The sequence spans 258 residues: Imidazole glycerol phosphate synthase subunit HisF (258 aa).

Active-site residues include D11 and D130.

This sequence belongs to the HisA/HisF family. In terms of assembly, heterodimer of HisH and HisF.

It is found in the cytoplasm. It carries out the reaction 5-[(5-phospho-1-deoxy-D-ribulos-1-ylimino)methylamino]-1-(5-phospho-beta-D-ribosyl)imidazole-4-carboxamide + L-glutamine = D-erythro-1-(imidazol-4-yl)glycerol 3-phosphate + 5-amino-1-(5-phospho-beta-D-ribosyl)imidazole-4-carboxamide + L-glutamate + H(+). Its pathway is amino-acid biosynthesis; L-histidine biosynthesis; L-histidine from 5-phospho-alpha-D-ribose 1-diphosphate: step 5/9. IGPS catalyzes the conversion of PRFAR and glutamine to IGP, AICAR and glutamate. The HisF subunit catalyzes the cyclization activity that produces IGP and AICAR from PRFAR using the ammonia provided by the HisH subunit. In Edwardsiella ictaluri (strain 93-146), this protein is Imidazole glycerol phosphate synthase subunit HisF.